Reading from the N-terminus, the 248-residue chain is Indole-3-glycerol phosphate synthase (248 aa).

The protein belongs to the TrpC family.

It carries out the reaction 1-(2-carboxyphenylamino)-1-deoxy-D-ribulose 5-phosphate + H(+) = (1S,2R)-1-C-(indol-3-yl)glycerol 3-phosphate + CO2 + H2O. Its pathway is amino-acid biosynthesis; L-tryptophan biosynthesis; L-tryptophan from chorismate: step 4/5. The chain is Indole-3-glycerol phosphate synthase from Sulfolobus acidocaldarius (strain ATCC 33909 / DSM 639 / JCM 8929 / NBRC 15157 / NCIMB 11770).